The sequence spans 501 residues: Aspartate--tRNA ligase, cytoplasmic (501 aa).

At T52 the chain carries Phosphothreonine. K74 is subject to N6-acetyllysine. E229 lines the L-aspartate pocket. Phosphoserine is present on S249. The tract at residues Q251–K254 is aspartate. An L-aspartate-binding site is contributed by R273. Residues R273–E275 and R281–L283 contribute to the ATP site. K374 is subject to N6-acetyllysine. The segment at K411 to S415 is binding site for the 3'-end of tRNA. Residue E424 participates in ATP binding. L-aspartate is bound by residues S427 and R431. An ATP-binding site is contributed by G472 to R475. The residue at position 500 (T500) is a Phosphothreonine; by PKA.

The protein belongs to the class-II aminoacyl-tRNA synthetase family. Type 2 subfamily. In terms of assembly, homodimer. Part of a multisubunit complex that groups tRNA ligases for Arg (RARS1), Asp (DARS1), Gln (QARS1), Ile (IARS1), Leu (LARS1), Lys (KARS1), Met (MARS1) the bifunctional ligase for Glu and Pro (EPRS1) and the auxiliary subunits AIMP1/p43, AIMP2/p38 and EEF1E1/p18. Expression in the developing and adult brain shows similar patterns. Highly expressed in the ventricular and subventricular zones, including hippocampal subfields, the midlateral temporal cortex and the frontal polar cortex. The cerebellum, cerebral cortex, hippocampus, and lateral ventricle show preferential neuronal expression. Expression in the peripheral neurons is evident in the colon.

The protein localises to the cytoplasm. Its subcellular location is the cytosol. It carries out the reaction tRNA(Asp) + L-aspartate + ATP = L-aspartyl-tRNA(Asp) + AMP + diphosphate. Functionally, catalyzes the specific attachment of an amino acid to its cognate tRNA in a 2 step reaction: the amino acid (AA) is first activated by ATP to form AA-AMP and then transferred to the acceptor end of the tRNA. The chain is Aspartate--tRNA ligase, cytoplasmic from Homo sapiens (Human).